The following is a 174-amino-acid chain: Protein-export protein SecB (174 aa).

Belongs to the SecB family. In terms of assembly, homotetramer, a dimer of dimers. One homotetramer interacts with 1 SecA dimer.

It is found in the cytoplasm. One of the proteins required for the normal export of preproteins out of the cell cytoplasm. It is a molecular chaperone that binds to a subset of precursor proteins, maintaining them in a translocation-competent state. It also specifically binds to its receptor SecA. In Ehrlichia ruminantium (strain Gardel), this protein is Protein-export protein SecB.